Consider the following 194-residue polypeptide: Prefoldin subunit 3 (194 aa).

Belongs to the prefoldin subunit alpha family. As to quaternary structure, heterohexamer of two PFD-alpha type and four PFD-beta type subunits. Interacts with itself. Interacts with Vhl and betaTub56D/tubulin beta-1 chain. Interacts with tubulin alpha-beta heterodimers by itself or in complex with Vhl. Does not interact with microtubules (MTs). Expressed in larval central nervous system (CNS) and pupal testis (at protein level).

It localises to the cytoplasm. Functionally, binds specifically to cytosolic chaperonin (c-CPN) and transfers target proteins to it. Binds to nascent polypeptide chain and promotes folding in an environment in which there are many competing pathways for nonnative proteins. Required for tubulin stability and spindle and centrosome formation in cooperation with Vhl. In Drosophila melanogaster (Fruit fly), this protein is Prefoldin subunit 3 (mgr).